A 133-amino-acid chain; its full sequence is DNA-binding protein inhibitor ID-2-A (133 aa).

Residues 23–75 (ARSKTPVDDPMSLLYNMNDCYSKLKELVPSIPQNKKVSKMEILQHVIDYILDL) form the bHLH domain. Positions 106–115 (LNTDISILSL) match the Nuclear export signal motif.

Heterodimer with other HLH proteins. In the embryo, expressed in a range of tissues, with primary expression in the developing pronephros; expressed in the pronephric anlage, and by the swimming tadpole stages expressed robustly in the pronephric tubules and weakly in the pronephric duct. Expressed in the secondary heart field. In the developing nervous system, expressed in the neural crest and in the neural folds during neurula stages, and at stage 20 in the neural tube, ventral mesoderm and mid-hindbrain boundary. By early tailbud stages, expressed in the neural tube, somites and branchial arches. In tadpoles (stage 37/38), expressed in the heart, eye, otic vesicle, somites and branchial arches. Also expressed in migrating muscle cells. Expressed at a low level in limbs, with expression decreasing as limbs develop, but expressed at a high level in blastemas (regenerated limbs), where expression is localized primarily to the blastemal epidermis. Widely expressed in adults with highest expression in the spleen, skin, intestine and brain, and at a much lower level in testis and heart.

The protein localises to the cytoplasm. It localises to the nucleus. Transcriptional regulator (lacking a basic DNA binding domain) which negatively regulates the basic helix-loop-helix (bHLH) transcription factors by forming heterodimers and inhibiting their DNA binding and transcriptional activity. Inhibits the activity of both neurogenic (neurod1/neuroD) and myogenic (myod1/myoD) bHLH factors. May play a role in the regulation of the circadian clock. This chain is DNA-binding protein inhibitor ID-2-A (id2-a), found in Xenopus laevis (African clawed frog).